The following is a 231-amino-acid chain: Small ribosomal subunit protein uS2 (231 aa).

The protein belongs to the universal ribosomal protein uS2 family.

This Blochmanniella floridana protein is Small ribosomal subunit protein uS2.